The sequence spans 186 residues: Protein GrpE (186 aa).

A compositionally biased stretch (polar residues) spans 1-15 (MADEQQTLDQQTPEQ). Positions 1–20 (MADEQQTLDQQTPEQPTGAA) are disordered.

This sequence belongs to the GrpE family. Homodimer.

Its subcellular location is the cytoplasm. Its function is as follows. Participates actively in the response to hyperosmotic and heat shock by preventing the aggregation of stress-denatured proteins, in association with DnaK and GrpE. It is the nucleotide exchange factor for DnaK and may function as a thermosensor. Unfolded proteins bind initially to DnaJ; upon interaction with the DnaJ-bound protein, DnaK hydrolyzes its bound ATP, resulting in the formation of a stable complex. GrpE releases ADP from DnaK; ATP binding to DnaK triggers the release of the substrate protein, thus completing the reaction cycle. Several rounds of ATP-dependent interactions between DnaJ, DnaK and GrpE are required for fully efficient folding. This is Protein GrpE from Pseudomonas aeruginosa (strain LESB58).